A 37-amino-acid polypeptide reads, in one-letter code: Large ribosomal subunit protein bL36c (37 aa).

It belongs to the bacterial ribosomal protein bL36 family.

It localises to the plastid. It is found in the chloroplast. The protein is Large ribosomal subunit protein bL36c (rpl36) of Anthoceros angustus (Hornwort).